An 832-amino-acid chain; its full sequence is Protein P (832 aa).

The terminal protein domain (TP) stretch occupies residues 1 to 177; the sequence is MPLSYQHFRR…FCGSPYSWEQ (177 aa). The tract at residues 178–335 is spacer; the sequence is DLQHGAESIH…YCLSLIVNLL (158 aa). Disordered stretches follow at residues 186–218 and 239–266; these read IHQQ…QSQQ and TARR…SCLY. The tract at residues 336–679 is polymerase/reverse transcriptase domain (RT); it reads EDWGPCDEYG…YLNLYPVARQ (344 aa). A Reverse transcriptase domain is found at 346-589; the sequence is EHHIRIPRTP…YSLHFMGYVI (244 aa). Residues Asp-418, Asp-540, and Asp-541 each contribute to the Mg(2+) site.

The protein belongs to the hepadnaviridae P protein family.

It carries out the reaction DNA(n) + a 2'-deoxyribonucleoside 5'-triphosphate = DNA(n+1) + diphosphate. The enzyme catalyses Endonucleolytic cleavage to 5'-phosphomonoester.. Its activity is regulated as follows. Activated by host HSP70 and HSP40 in vitro to be able to bind the epsilon loop of the pgRNA. Because deletion of the RNase H region renders the protein partly chaperone-independent, the chaperones may be needed indirectly to relieve occlusion of the RNA-binding site by this domain. Inhibited by several reverse-transcriptase inhibitors: Lamivudine, Adefovir and Entecavir. Functionally, multifunctional enzyme that converts the viral RNA genome into dsDNA in viral cytoplasmic capsids. This enzyme displays a DNA polymerase activity that can copy either DNA or RNA templates, and a ribonuclease H (RNase H) activity that cleaves the RNA strand of RNA-DNA heteroduplexes in a partially processive 3'- to 5'-endonucleasic mode. Neo-synthesized pregenomic RNA (pgRNA) are encapsidated together with the P protein, and reverse-transcribed inside the nucleocapsid. Initiation of reverse-transcription occurs first by binding the epsilon loop on the pgRNA genome, and is initiated by protein priming, thereby the 5'-end of (-)DNA is covalently linked to P protein. Partial (+)DNA is synthesized from the (-)DNA template and generates the relaxed circular DNA (RC-DNA) genome. After budding and infection, the RC-DNA migrates in the nucleus, and is converted into a plasmid-like covalently closed circular DNA (cccDNA). The activity of P protein does not seem to be necessary for cccDNA generation, and is presumably released from (+)DNA by host nuclear DNA repair machinery. This chain is Protein P, found in Homo sapiens (Human).